The sequence spans 142 residues: Putative pre-16S rRNA nuclease (142 aa).

This sequence belongs to the YqgF nuclease family.

The protein resides in the cytoplasm. In terms of biological role, could be a nuclease involved in processing of the 5'-end of pre-16S rRNA. The polypeptide is Putative pre-16S rRNA nuclease (Lactobacillus helveticus (strain DPC 4571)).